The following is a 566-amino-acid chain: Erythroid membrane-associated protein (566 aa).

Positions 1-29 are cleaved as a signal peptide; the sequence is MERPSPCGSWLVGCLFTIAVFQPPVQVLG. The Ig-like V-type domain maps to 30–139; that stretch reads DAGKVYIAPL…SSREDNVTLQ (110 aa). Residues 30–246 are Extracellular-facing; it reads DAGKVYIAPL…PERGSLSSPA (217 aa). Cys47 and Cys123 are disulfide-bonded. N-linked (GlcNAc...) asparagine glycans are attached at residues Asn135 and Asn214. A helical transmembrane segment spans residues 247–267; the sequence is VALSVVLPVLGLLILLGIWLI. Residues 268-566 are Cytoplasmic-facing; the sequence is CKQKKSKEKL…ALKGLKVPSL (299 aa). The 199-residue stretch at 311–509 folds into the B30.2/SPRY domain; the sequence is KLKRAAANAG…LIICTELQKS (199 aa). Ser509 carries the post-translational modification Phosphoserine.

The protein belongs to the immunoglobulin superfamily. BTN/MOG family. In terms of processing, glycosylated. Expressed in spleen and bone marrow.

It is found in the cell membrane. The protein localises to the cytoplasm. In terms of biological role, possible role as a cell-adhesion or receptor molecule of erythroid cells. In Mus musculus (Mouse), this protein is Erythroid membrane-associated protein (Ermap).